We begin with the raw amino-acid sequence, 409 residues long: Sex-determination protein fem-3 (409 aa).

As to quaternary structure, component of a complex containing fem-1, fem-2 and fem-3. Interacts with fem-1 and fem-2 (via N-terminus). Part of a E3 ubiquitin-protein ligase complex, at least composed of cul-2, elc-1, tra-1, fem-1, fem-2 and fem-3; mediates the ubiquitination and subsequent proteasomal degradation of tra-1. Interacts with sel-10. Interacts with tra-2.

Functionally, required for male development. In XO (male) animals, fem-3 directs male differentiation in all tissues. In XX (hermaphrodite animals), it specifies the first 80 or so germ cells to be sperm. Negatively regulates male development when bound to tra-2. The polypeptide is Sex-determination protein fem-3 (Caenorhabditis briggsae).